Reading from the N-terminus, the 1413-residue chain is GTPase-activating protein and VPS9 domain-containing protein 1 (1413 aa).

Positions 147–385 constitute a Ras-GAP domain; sequence SYLLQVLRYL…AAFLDVVIGG (239 aa). Ser-227 carries the post-translational modification Phosphoserine. A phosphothreonine mark is found at Thr-390 and Thr-458. Disordered stretches follow at residues 448–474, 540–587, 718–799, and 826–852; these read KPGKSSSLEMTPYSTPQLSPAATPANK, LSDG…GSNG, ESCS…PPSQ, and HYARPSHPPPDPPILEGAVGGNEARLP. A compositionally biased stretch (polar residues) spans 451 to 467; that stretch reads KSSSLEMTPYSTPQLSP. Residue Tyr-460 is modified to Phosphotyrosine. At Ser-466 the chain carries Phosphoserine. A Phosphothreonine modification is found at Thr-470. Ser-721, Ser-725, and Ser-736 each carry phosphoserine. The span at 737–756 shows a compositional bias: polar residues; sequence SRPSTPGLSVVSGISATSED. Phosphothreonine is present on Thr-741. Ser-745 bears the Phosphoserine mark. The segment covering 757–768 has biased composition (basic and acidic residues); that stretch reads IPNKIEDLRSEC. Residues Ser-856, Ser-882, Ser-883, Ser-888, Ser-894, Ser-946, Ser-972, and Ser-999 each carry the phosphoserine modification. Residues 871 to 882 show a composition bias toward basic and acidic residues; sequence HSYPERLVRSRS. The interval 871-957 is disordered; it reads HSYPERLVRS…DEKSDRNRPW (87 aa). The span at 883–897 shows a compositional bias: low complexity; it reads SDVVSSVRRPMSDPS. A compositionally biased stretch (basic and acidic residues) spans 934-955; that stretch reads DSSRGETEERKDSDDEKSDRNR. Residues 1011–1049 are disordered; sequence VMGDGESAHDSPRDETLQNISADDLPDSASQAAHPQDSA. A compositionally biased stretch (basic and acidic residues) spans 1016–1026; it reads ESAHDSPRDET. Residues Ser-1031 and Ser-1038 each carry the phosphoserine modification. One can recognise a VPS9 domain in the interval 1273–1413; that stretch reads ILRDQVLHEH…EFIKTIDDRK (141 aa).

It belongs to the GAPVD1 family. Interacts with TRIP10/CIP4. Interacts with RAB5A.

It is found in the membrane. Its subcellular location is the endosome. Functionally, acts both as a GTPase-activating protein (GAP) and a guanine nucleotide exchange factor (GEF), and participates in various processes such as endocytosis, insulin receptor internalization or LC2A4/GLUT4 trafficking. Acts as a GEF for the Ras-related protein RAB31 by exchanging bound GDP for free GTP, leading to regulate LC2A4/GLUT4 trafficking. In the absence of insulin, it maintains RAB31 in an active state and promotes a futile cycle between LC2A4/GLUT4 storage vesicles and early endosomes, retaining LC2A4/GLUT4 inside the cells. Upon insulin stimulation, it is translocated to the plasma membrane, releasing LC2A4/GLUT4 from intracellular storage vesicles. Also involved in EGFR trafficking and degradation, possibly by promoting EGFR ubiquitination and subsequent degradation by the proteasome. Has GEF activity for Rab5 and GAP activity for Ras. This Bos taurus (Bovine) protein is GTPase-activating protein and VPS9 domain-containing protein 1 (GAPVD1).